A 69-amino-acid chain; its full sequence is Small ribosomal subunit protein bS21 (69 aa).

The disordered stretch occupies residues 49-69 (IESAKRKAEKKKRLFSKKDKA).

The protein belongs to the bacterial ribosomal protein bS21 family.

The polypeptide is Small ribosomal subunit protein bS21 (Leptospira borgpetersenii serovar Hardjo-bovis (strain JB197)).